A 333-amino-acid chain; its full sequence is Photosystem II assembly lipoprotein Ycf48 (333 aa).

Positions 1-23 (MTRFVSSAINLLLVLVLGVSLSG) are cleaved as a signal peptide. Cys24 is lipidated: N-palmitoyl cysteine. A lipid anchor (S-diacylglycerol cysteine) is attached at Cys24.

It belongs to the Ycf48 family. As to quaternary structure, part of early PSII assembly complexes which includes D1 (psbA) and PsbI; not found in mature PSII. Binds to the lumenal side of PSII complexes. Interacts with YidC.

The protein localises to the cellular thylakoid membrane. Its function is as follows. A factor required for optimal assembly of photosystem II (PSII), acting in the early stages of PSII assembly. Also plays a role in replacement of photodamaged D1 (psbA). Assists YidC in synthesis of chlorophyll-binding proteins. In Parasynechococcus marenigrum (strain WH8102), this protein is Photosystem II assembly lipoprotein Ycf48.